A 134-amino-acid chain; its full sequence is NAD(P)H-quinone oxidoreductase subunit 3 (134 aa).

3 helical membrane-spanning segments follow: residues 20-40, 78-98, and 103-123; these read GYDA…LALV, MFAL…PWAV, and LGLL…VALA.

It belongs to the complex I subunit 3 family. In terms of assembly, NDH-1 can be composed of about 15 different subunits; different subcomplexes with different compositions have been identified which probably have different functions.

The protein localises to the cellular thylakoid membrane. The enzyme catalyses a plastoquinone + NADH + (n+1) H(+)(in) = a plastoquinol + NAD(+) + n H(+)(out). It carries out the reaction a plastoquinone + NADPH + (n+1) H(+)(in) = a plastoquinol + NADP(+) + n H(+)(out). In terms of biological role, NDH-1 shuttles electrons from an unknown electron donor, via FMN and iron-sulfur (Fe-S) centers, to quinones in the respiratory and/or the photosynthetic chain. The immediate electron acceptor for the enzyme in this species is believed to be plastoquinone. Couples the redox reaction to proton translocation, and thus conserves the redox energy in a proton gradient. Cyanobacterial NDH-1 also plays a role in inorganic carbon-concentration. This Prochlorococcus marinus (strain MIT 9303) protein is NAD(P)H-quinone oxidoreductase subunit 3.